We begin with the raw amino-acid sequence, 220 residues long: Riboflavin kinase (220 aa).

The tract at residues 1–92 (METDDQYYRA…LSRILAIKNN (92 aa)) is H-T-H motif-like. The tract at residues 93–220 (VVITGTVTSG…GDRVSVEVYT (128 aa)) is riboflavin kinase. 102 to 107 (GMGEGR) is a binding site for CDP. Thr-131 and Asn-133 together coordinate Mg(2+). FMN is bound by residues Thr-188 and Glu-195. Residue 200–203 (KYLR) coordinates CDP.

It belongs to the archaeal riboflavin kinase family. Mg(2+) serves as cofactor.

The enzyme catalyses riboflavin + CTP = CDP + FMN + H(+). It functions in the pathway cofactor biosynthesis; FMN biosynthesis; FMN from riboflavin (CTP route): step 1/1. Catalyzes the CTP-dependent phosphorylation of riboflavin (vitamin B2) to form flavin mononucleotide (FMN). In Thermoplasma acidophilum (strain ATCC 25905 / DSM 1728 / JCM 9062 / NBRC 15155 / AMRC-C165), this protein is Riboflavin kinase (ribK).